We begin with the raw amino-acid sequence, 405 residues long: Acetylornithine/succinyldiaminopimelate aminotransferase (405 aa).

Pyridoxal 5'-phosphate contacts are provided by residues 107-108 (GA) and Phe-140. Residue Arg-143 coordinates N(2)-acetyl-L-ornithine. A pyridoxal 5'-phosphate-binding site is contributed by 225 to 228 (DEVQ). Residue Lys-254 is modified to N6-(pyridoxal phosphate)lysine. Residue Thr-282 coordinates N(2)-acetyl-L-ornithine. Pyridoxal 5'-phosphate is bound at residue Thr-283.

Belongs to the class-III pyridoxal-phosphate-dependent aminotransferase family. ArgD subfamily. Homodimer. The cofactor is pyridoxal 5'-phosphate.

It localises to the cytoplasm. The catalysed reaction is N(2)-acetyl-L-ornithine + 2-oxoglutarate = N-acetyl-L-glutamate 5-semialdehyde + L-glutamate. The enzyme catalyses N-succinyl-(2S,6S)-2,6-diaminopimelate + 2-oxoglutarate = (S)-2-succinylamino-6-oxoheptanedioate + L-glutamate. It participates in amino-acid biosynthesis; L-arginine biosynthesis; N(2)-acetyl-L-ornithine from L-glutamate: step 4/4. Its pathway is amino-acid biosynthesis; L-lysine biosynthesis via DAP pathway; LL-2,6-diaminopimelate from (S)-tetrahydrodipicolinate (succinylase route): step 2/3. Involved in both the arginine and lysine biosynthetic pathways. The sequence is that of Acetylornithine/succinyldiaminopimelate aminotransferase from Yersinia pestis.